Here is a 353-residue protein sequence, read N- to C-terminus: DNA polymerase IV (353 aa).

Residues 6–187 (IIHVDCDCFY…LPVSKLHGVG (182 aa)) enclose the UmuC domain. Mg(2+) is bound by residues Asp-10 and Asp-105. The active site involves Glu-106.

It belongs to the DNA polymerase type-Y family. In terms of assembly, monomer. Mg(2+) serves as cofactor.

The protein localises to the cytoplasm. It carries out the reaction DNA(n) + a 2'-deoxyribonucleoside 5'-triphosphate = DNA(n+1) + diphosphate. Its function is as follows. Poorly processive, error-prone DNA polymerase involved in untargeted mutagenesis. Copies undamaged DNA at stalled replication forks, which arise in vivo from mismatched or misaligned primer ends. These misaligned primers can be extended by PolIV. Exhibits no 3'-5' exonuclease (proofreading) activity. May be involved in translesional synthesis, in conjunction with the beta clamp from PolIII. The polypeptide is DNA polymerase IV (Pseudomonas fluorescens (strain Pf0-1)).